A 170-amino-acid chain; its full sequence is Adenine phosphoribosyltransferase (170 aa).

It belongs to the purine/pyrimidine phosphoribosyltransferase family. As to quaternary structure, homodimer.

The protein resides in the cytoplasm. The catalysed reaction is AMP + diphosphate = 5-phospho-alpha-D-ribose 1-diphosphate + adenine. Its pathway is purine metabolism; AMP biosynthesis via salvage pathway; AMP from adenine: step 1/1. Functionally, catalyzes a salvage reaction resulting in the formation of AMP, that is energically less costly than de novo synthesis. The chain is Adenine phosphoribosyltransferase from Lactococcus lactis subsp. cremoris (strain MG1363).